The following is a 188-amino-acid chain: Peptidyl-tRNA hydrolase (188 aa).

Residue Tyr-14 coordinates tRNA. The active-site Proton acceptor is the His-19. TRNA-binding residues include Tyr-64, Asn-66, and Asn-112.

It belongs to the PTH family. In terms of assembly, monomer.

The protein localises to the cytoplasm. The enzyme catalyses an N-acyl-L-alpha-aminoacyl-tRNA + H2O = an N-acyl-L-amino acid + a tRNA + H(+). Hydrolyzes ribosome-free peptidyl-tRNAs (with 1 or more amino acids incorporated), which drop off the ribosome during protein synthesis, or as a result of ribosome stalling. In terms of biological role, catalyzes the release of premature peptidyl moieties from peptidyl-tRNA molecules trapped in stalled 50S ribosomal subunits, and thus maintains levels of free tRNAs and 50S ribosomes. This Bacillus velezensis (strain DSM 23117 / BGSC 10A6 / LMG 26770 / FZB42) (Bacillus amyloliquefaciens subsp. plantarum) protein is Peptidyl-tRNA hydrolase.